Here is a 393-residue protein sequence, read N- to C-terminus: GDP-4-keto-6-deoxy-D-mannose 3-dehydratase (393 aa).

A GDP-4-dehydro-alpha-D-rhamnose-binding site is contributed by 30–33 (NMFT). The chain crosses the membrane as a helical span at residues 53-73 (YSVMVSSGSTANLLMIAALFF). Pyridoxal 5'-phosphate-binding positions include 60–61 (GS), tryptophan 92, glutamate 166, and serine 187. The active-site Proton donor/acceptor is histidine 192. L-glutamate is bound at residue histidine 219. Arginine 223 lines the GDP-4-dehydro-alpha-D-rhamnose pocket. Asparagine 252 is a binding site for pyridoxal 5'-phosphate. Arginine 254 is a binding site for L-glutamate. A GDP-4-dehydro-alpha-D-rhamnose-binding site is contributed by glutamate 333.

The protein belongs to the DegT/DnrJ/EryC1 family. In terms of assembly, homodimer. Requires pyridoxal 5'-phosphate as cofactor.

Its subcellular location is the cell membrane. It catalyses the reaction GDP-4-dehydro-alpha-D-rhamnose + L-glutamate = GDP-4-dehydro-3,6-dideoxy-alpha-D-mannose + 2-oxoglutarate + NH4(+). It participates in nucleotide-sugar metabolism; GDP-L-colitose biosynthesis. In terms of biological role, involved in the biosynthesis of L-colitose, a 3,6-dideoxyhexose present in the O-antigen region of lipopolysaccharides (LPS), where it serves as an antigenic determinant and is vital for bacterial defense and survival. Catalyzes the removal of the C3'-hydroxyl group from GDP-4-keto-6-deoxy-D-mannose via a combined transamination-deoxygenation reaction. The catalysis is initiated by a transamination step in which pyridoxal 5'-phosphate (PLP) is converted to pyridoxamine 5'-phosphate (PMP) in the presence of L-glutamate. This coenzyme then forms a Schiff base with GDP-4-keto-6-deoxy-D-mannose and the resulting adduct undergoes a PMP-mediated beta-dehydration reaction to give a sugar enamine intermediate, which after tautomerization and hydrolysis to release ammonia yields GDP-4-keto-3,6-dideoxy-D-mannose as a product. The chain is GDP-4-keto-6-deoxy-D-mannose 3-dehydratase from Yersinia pseudotuberculosis.